We begin with the raw amino-acid sequence, 188 residues long: Probable thiol:disulfide interchange protein DsbE-2 (188 aa).

Topologically, residues 1–11 (MSMLHQQKRKN) are cytoplasmic. The helical transmembrane segment at 12 to 32 (HFVFLPLVILLAVCALLFIGL) threads the bilayer. The Periplasmic segment spans residues 33–188 (QQDPQKIASA…KLEAENAKVR (156 aa)). In terms of domain architecture, Thioredoxin spans 42-179 (ALIGKPVPTF…QEMFIPEWQK (138 aa)). C82 and C85 are oxidised to a cystine.

It belongs to the thioredoxin family. DsbE subfamily.

The protein resides in the cell inner membrane. Functionally, could be involved in disulfide bond formation. Could catalyzes a late, reductive step in the assembly of periplasmic NrfA c-type cytochrome, probably the reduction of disulfide bonds of the apocytochrome c to allow covalent linkage with the heme. Possible subunit of a heme lyase. The sequence is that of Probable thiol:disulfide interchange protein DsbE-2 (nrfX) from Pasteurella multocida (strain Pm70).